A 62-amino-acid polypeptide reads, in one-letter code: Photosystem II reaction center protein Z (62 aa).

The next 2 membrane-spanning stretches (helical) occupy residues 8–28 (ALFA…VILA) and 41–61 (FSGA…NSFI).

Belongs to the PsbZ family. PSII is composed of 1 copy each of membrane proteins PsbA, PsbB, PsbC, PsbD, PsbE, PsbF, PsbH, PsbI, PsbJ, PsbK, PsbL, PsbM, PsbT, PsbY, PsbZ, Psb30/Ycf12, at least 3 peripheral proteins of the oxygen-evolving complex and a large number of cofactors. It forms dimeric complexes.

It localises to the plastid. It is found in the chloroplast thylakoid membrane. Its function is as follows. May control the interaction of photosystem II (PSII) cores with the light-harvesting antenna, regulates electron flow through the 2 photosystem reaction centers. PSII is a light-driven water plastoquinone oxidoreductase, using light energy to abstract electrons from H(2)O, generating a proton gradient subsequently used for ATP formation. The chain is Photosystem II reaction center protein Z from Chara vulgaris (Common stonewort).